Reading from the N-terminus, the 56-residue chain is Large ribosomal subunit protein bL33 (56 aa).

The protein belongs to the bacterial ribosomal protein bL33 family.

This chain is Large ribosomal subunit protein bL33, found in Campylobacter hominis (strain ATCC BAA-381 / DSM 21671 / CCUG 45161 / LMG 19568 / NCTC 13146 / CH001A).